A 264-amino-acid chain; its full sequence is 5'-nucleotidase SurE (264 aa).

4 residues coordinate a divalent metal cation: aspartate 10, aspartate 11, serine 43, and asparagine 97.

It belongs to the SurE nucleotidase family. A divalent metal cation serves as cofactor.

The protein localises to the cytoplasm. It catalyses the reaction a ribonucleoside 5'-phosphate + H2O = a ribonucleoside + phosphate. Functionally, nucleotidase that shows phosphatase activity on nucleoside 5'-monophosphates. The protein is 5'-nucleotidase SurE of Sulfurimonas denitrificans (strain ATCC 33889 / DSM 1251) (Thiomicrospira denitrificans (strain ATCC 33889 / DSM 1251)).